The sequence spans 238 residues: Ribonuclease PH (238 aa).

Phosphate is bound by residues Arg-86 and 124-126 (GTR).

This sequence belongs to the RNase PH family. Homohexameric ring arranged as a trimer of dimers.

It catalyses the reaction tRNA(n+1) + phosphate = tRNA(n) + a ribonucleoside 5'-diphosphate. In terms of biological role, phosphorolytic 3'-5' exoribonuclease that plays an important role in tRNA 3'-end maturation. Removes nucleotide residues following the 3'-CCA terminus of tRNAs; can also add nucleotides to the ends of RNA molecules by using nucleoside diphosphates as substrates, but this may not be physiologically important. Probably plays a role in initiation of 16S rRNA degradation (leading to ribosome degradation) during starvation. The protein is Ribonuclease PH of Serratia proteamaculans (strain 568).